Here is a 465-residue protein sequence, read N- to C-terminus: Probable oxidoreductase AIM17 (465 aa).

The transit peptide at 1 to 16 (MLRSNLCRGSRILARL) directs the protein to the mitochondrion. The Fe cation site is built by His-246, Asp-248, and His-428.

This sequence belongs to the gamma-BBH/TMLD family. Fe(2+) serves as cofactor. Requires L-ascorbate as cofactor.

The protein resides in the mitochondrion. This chain is Probable oxidoreductase AIM17 (AIM17), found in Saccharomyces cerevisiae (strain ATCC 204508 / S288c) (Baker's yeast).